The following is a 945-amino-acid chain: Isoleucine--tRNA ligase (945 aa).

The 'HIGH' region signature appears at 66–76 (PYANGDIHLGH). L-isoleucyl-5'-AMP is bound at residue Glu581. The 'KMSKS' region motif lies at 622–626 (KMSKS). Residue Lys625 coordinates ATP. Cys908, Cys911, Cys928, and Cys931 together coordinate Zn(2+).

Belongs to the class-I aminoacyl-tRNA synthetase family. IleS type 1 subfamily. In terms of assembly, monomer. Zn(2+) serves as cofactor.

It is found in the cytoplasm. It carries out the reaction tRNA(Ile) + L-isoleucine + ATP = L-isoleucyl-tRNA(Ile) + AMP + diphosphate. Catalyzes the attachment of isoleucine to tRNA(Ile). As IleRS can inadvertently accommodate and process structurally similar amino acids such as valine, to avoid such errors it has two additional distinct tRNA(Ile)-dependent editing activities. One activity is designated as 'pretransfer' editing and involves the hydrolysis of activated Val-AMP. The other activity is designated 'posttransfer' editing and involves deacylation of mischarged Val-tRNA(Ile). The chain is Isoleucine--tRNA ligase from Burkholderia vietnamiensis (strain G4 / LMG 22486) (Burkholderia cepacia (strain R1808)).